A 248-amino-acid polypeptide reads, in one-letter code: Urease accessory protein UreG 1 (248 aa).

Positions 1–14 (MLPEHHDHGHEHGG) are enriched in basic and acidic residues. Positions 1-36 (MLPEHHDHGHEHGGNGHGHGHRHQVNFDPTAAEPDP) are disordered. GTP is bound at residue 53–60 (GPVGSGKT).

Belongs to the SIMIBI class G3E GTPase family. UreG subfamily. Homodimer. UreD, UreF and UreG form a complex that acts as a GTP-hydrolysis-dependent molecular chaperone, activating the urease apoprotein by helping to assemble the nickel containing metallocenter of UreC. The UreE protein probably delivers the nickel.

The protein resides in the cytoplasm. Facilitates the functional incorporation of the urease nickel metallocenter. This process requires GTP hydrolysis, probably effectuated by UreG. This Saccharopolyspora erythraea (strain ATCC 11635 / DSM 40517 / JCM 4748 / NBRC 13426 / NCIMB 8594 / NRRL 2338) protein is Urease accessory protein UreG 1.